Reading from the N-terminus, the 491-residue chain is UDP-N-acetylmuramate--L-alanine ligase (491 aa).

Residue 126-132 coordinates ATP; sequence GTHGKTT.

The protein belongs to the MurCDEF family.

It localises to the cytoplasm. It catalyses the reaction UDP-N-acetyl-alpha-D-muramate + L-alanine + ATP = UDP-N-acetyl-alpha-D-muramoyl-L-alanine + ADP + phosphate + H(+). It functions in the pathway cell wall biogenesis; peptidoglycan biosynthesis. Cell wall formation. This is UDP-N-acetylmuramate--L-alanine ligase from Salmonella gallinarum (strain 287/91 / NCTC 13346).